A 408-amino-acid chain; its full sequence is LL-diaminopimelate aminotransferase (408 aa).

Substrate contacts are provided by Tyr-15 and Gly-42. Pyridoxal 5'-phosphate-binding positions include Tyr-72, 108–109, Tyr-132, Asn-187, Tyr-218, and 246–248; these read SK and SFS. Positions 109, 132, and 187 each coordinate substrate. At Lys-249 the chain carries N6-(pyridoxal phosphate)lysine. Pyridoxal 5'-phosphate-binding residues include Arg-257 and Asn-291. Substrate-binding residues include Asn-291 and Arg-387.

Belongs to the class-I pyridoxal-phosphate-dependent aminotransferase family. LL-diaminopimelate aminotransferase subfamily. As to quaternary structure, homodimer. Requires pyridoxal 5'-phosphate as cofactor.

The catalysed reaction is (2S,6S)-2,6-diaminopimelate + 2-oxoglutarate = (S)-2,3,4,5-tetrahydrodipicolinate + L-glutamate + H2O + H(+). It participates in amino-acid biosynthesis; L-lysine biosynthesis via DAP pathway; LL-2,6-diaminopimelate from (S)-tetrahydrodipicolinate (aminotransferase route): step 1/1. Involved in the synthesis of meso-diaminopimelate (m-DAP or DL-DAP), required for both lysine and peptidoglycan biosynthesis. Catalyzes the direct conversion of tetrahydrodipicolinate to LL-diaminopimelate. This chain is LL-diaminopimelate aminotransferase, found in Prochlorococcus marinus (strain NATL2A).